Consider the following 576-residue polypeptide: Arginine--tRNA ligase (576 aa).

The 'HIGH' region motif lies at 122–132 (PNVAKQMHVGH).

This sequence belongs to the class-I aminoacyl-tRNA synthetase family. In terms of assembly, monomer.

It localises to the cytoplasm. The enzyme catalyses tRNA(Arg) + L-arginine + ATP = L-arginyl-tRNA(Arg) + AMP + diphosphate. This chain is Arginine--tRNA ligase, found in Proteus mirabilis (strain HI4320).